Reading from the N-terminus, the 561-residue chain is Centromere protein T (561 aa).

Residues 1-78 (MADHNPDGDP…IGRSAHVQAR (78 aa)) are disordered. Basic and acidic residues predominate over residues 18–27 (RVLDTADPRT). Over residues 45-57 (TASSRRLSGQTKT) the composition is skewed to polar residues. Ser-47 bears the Phosphoserine mark. Thr-85 is modified (phosphothreonine). The interval 93–421 (ILLTAPESSI…RHHQFPEPAP (329 aa)) is flexible stalk domain. Disordered regions lie at residues 114–134 (APQVVQPSRRESSRGSLELQL), 256–293 (HSLPCTPHTGAEDAEQAAGRRTQSSGPGLQNNSPGKPA), and 314–457 (SSGV…DPHK). The segment covering 276 to 289 (RTQSSGPGLQNNSP) has biased composition (polar residues). Basic and acidic residues predominate over residues 329–341 (GVEEAEKKMKEEG). A phosphoserine mark is found at Ser-343, Ser-345, Ser-356, Ser-373, Ser-385, Ser-386, and Ser-397. A compositionally biased stretch (polar residues) spans 365–376 (TQVTEAEGSQGT). Positions 439–450 (RCPPRSRTTGPR) are enriched in low complexity.

This sequence belongs to the CENP-T/CNN1 family. In terms of assembly, component of the CENPA-CAD complex, composed of CENPI, CENPK, CENPL, CENPO, CENPP, CENPQ, CENPR and CENPS. The CENPA-CAD complex is probably recruited on centromeres by the CENPA-NAC complex, at least composed of CENPA, CENPC, CENPH, CENPM, CENPN, CENPT and CENPU. Identified in a centromeric complex containing histones H2A, H2B, H3 and H4, and at least CENPA, CENPB, CENPC, CENPT, CENPN, HJURP, SUPT16H, SSRP1 and RSF1. Interacts (via N-terminus) with the NDC80 complex. Heterodimer with CENPW; this dimer coassembles with CENPS-CENPX heterodimers at centromeres to form the tetrameric CENP-T-W-S-X complex. Dynamically phosphorylated during the cell cycle. Phosphorylated during G2 phase, metaphase and anaphase, but not during telophase or G1 phase.

The protein resides in the nucleus. It is found in the chromosome. Its subcellular location is the centromere. It localises to the kinetochore. Functionally, component of the CENPA-NAC (nucleosome-associated) complex, a complex that plays a central role in assembly of kinetochore proteins, mitotic progression and chromosome segregation. The CENPA-NAC complex recruits the CENPA-CAD (nucleosome distal) complex and may be involved in incorporation of newly synthesized CENPA into centromeres. Part of a nucleosome-associated complex that binds specifically to histone H3-containing nucleosomes at the centromere, as opposed to nucleosomes containing CENPA. Component of the heterotetrameric CENP-T-W-S-X complex that binds and supercoils DNA, and plays an important role in kinetochore assembly. CENPT has a fundamental role in kinetochore assembly and function. It is one of the inner kinetochore proteins, with most further proteins binding downstream. Required for normal chromosome organization and normal progress through mitosis. This chain is Centromere protein T (CENPT), found in Macaca fascicularis (Crab-eating macaque).